The chain runs to 510 residues: Pectinesterase 2 (510 aa).

Residues 1 to 19 (MALRILITVSLVLFSLSHT) form the signal peptide. Residues N110 and N158 are each glycosylated (N-linked (GlcNAc...) asparagine). Positions 275 and 305 each coordinate substrate. The Proton donor role is filled by D328. C342 and C362 are disulfide-bonded. D349 acts as the Nucleophile in catalysis. N-linked (GlcNAc...) asparagine glycans are attached at residues N371 and N385. The substrate site is built by R416 and W418.

The protein in the N-terminal section; belongs to the PMEI family. In the C-terminal section; belongs to the pectinesterase family. Expressed at low levels in young leaves, young bark, young fruit, mature fruit vesicles, shoots and flower buds, young bark and juice vesicles. In both leaf and fruit abscission zones, and mature leaves, expression was initially undetectable but increased markedly following ethylene treatment.

The protein localises to the secreted. The protein resides in the cell wall. The enzyme catalyses [(1-&gt;4)-alpha-D-galacturonosyl methyl ester](n) + n H2O = [(1-&gt;4)-alpha-D-galacturonosyl](n) + n methanol + n H(+). The protein operates within glycan metabolism; pectin degradation; 2-dehydro-3-deoxy-D-gluconate from pectin: step 1/5. Functionally, acts in the modification of cell walls via demethylesterification of cell wall pectin. This is Pectinesterase 2 (PECS-2.1) from Citrus sinensis (Sweet orange).